The sequence spans 141 residues: Large ribosomal subunit protein uL11 (141 aa).

This sequence belongs to the universal ribosomal protein uL11 family. In terms of assembly, part of the ribosomal stalk of the 50S ribosomal subunit. Interacts with L10 and the large rRNA to form the base of the stalk. L10 forms an elongated spine to which L12 dimers bind in a sequential fashion forming a multimeric L10(L12)X complex. One or more lysine residues are methylated.

Its function is as follows. Forms part of the ribosomal stalk which helps the ribosome interact with GTP-bound translation factors. In Alkaliphilus metalliredigens (strain QYMF), this protein is Large ribosomal subunit protein uL11.